A 302-amino-acid chain; its full sequence is Stanniocalcin-2 (302 aa).

The first 24 residues, 1-24, serve as a signal peptide directing secretion; that stretch reads MCAERLGHFMTLALVLATIDPARG. The tract at residues 23–44 is disordered; the sequence is RGTDATNPPEGPQDRSSQQKGR. The N-linked (GlcNAc...) asparagine glycan is linked to asparagine 73. Residues 218 to 302 are disordered; the sequence is PPTAPPERQP…EQSEYSDIRR (85 aa). Basic and acidic residues predominate over residues 227–264; the sequence is PQVDRAKLSRAHHGEAGHHLPEPSSRETGRGAKGERGS. Phosphoserine occurs at positions 250 and 251. A Phosphothreonine modification is found at threonine 254.

This sequence belongs to the stanniocalcin family. Homodimer; disulfide-linked.

Its subcellular location is the secreted. Its function is as follows. Has an anti-hypocalcemic action on calcium and phosphate homeostasis. This is Stanniocalcin-2 (STC2) from Macaca nemestrina (Pig-tailed macaque).